Reading from the N-terminus, the 320-residue chain is Fructose-1,6-bisphosphatase class 1 (320 aa).

Glu-84, Asp-103, Leu-105, and Asp-106 together coordinate Mg(2+). Substrate-binding positions include 106–109 (DGSS), Asn-196, and Lys-262. Glu-268 serves as a coordination point for Mg(2+).

Belongs to the FBPase class 1 family. As to quaternary structure, homotetramer. It depends on Mg(2+) as a cofactor.

Its subcellular location is the cytoplasm. It catalyses the reaction beta-D-fructose 1,6-bisphosphate + H2O = beta-D-fructose 6-phosphate + phosphate. The protein operates within carbohydrate biosynthesis; gluconeogenesis. The protein is Fructose-1,6-bisphosphatase class 1 of Shewanella amazonensis (strain ATCC BAA-1098 / SB2B).